The primary structure comprises 397 residues: Elongation factor Tu (397 aa).

The tr-type G domain maps to 10–206 (KPHVNIGTIG…AVDASIPEPE (197 aa)). Residues 19–26 (GHIDHGKT) form a G1 region. 19–26 (GHIDHGKT) is a binding site for GTP. Position 26 (Thr26) interacts with Mg(2+). Positions 62–66 (GITIS) are G2. The tract at residues 83-86 (DCPG) is G3. GTP-binding positions include 83–87 (DCPGH) and 138–141 (NKAD). Positions 138-141 (NKAD) are G4. The interval 176-178 (SAL) is G5.

Belongs to the TRAFAC class translation factor GTPase superfamily. Classic translation factor GTPase family. EF-Tu/EF-1A subfamily. In terms of assembly, monomer.

It localises to the cytoplasm. It carries out the reaction GTP + H2O = GDP + phosphate + H(+). In terms of biological role, GTP hydrolase that promotes the GTP-dependent binding of aminoacyl-tRNA to the A-site of ribosomes during protein biosynthesis. The chain is Elongation factor Tu from Parafrankia sp. (strain EAN1pec).